A 369-amino-acid polypeptide reads, in one-letter code: Small ribosomal subunit biogenesis GTPase RsgA (369 aa).

The CP-type G domain occupies 116–271 (GEQLIAANLD…LIDNPGIREI (156 aa)). GTP contacts are provided by residues 161 to 164 (NKID) and 213 to 221 (GSSGVGKST). Zn(2+) is bound by residues Cys-294, Cys-299, His-301, and Cys-307.

The protein belongs to the TRAFAC class YlqF/YawG GTPase family. RsgA subfamily. As to quaternary structure, monomer. Associates with 30S ribosomal subunit, binds 16S rRNA. It depends on Zn(2+) as a cofactor.

It is found in the cytoplasm. In terms of biological role, one of several proteins that assist in the late maturation steps of the functional core of the 30S ribosomal subunit. Helps release RbfA from mature subunits. May play a role in the assembly of ribosomal proteins into the subunit. Circularly permuted GTPase that catalyzes slow GTP hydrolysis, GTPase activity is stimulated by the 30S ribosomal subunit. In Methanosarcina acetivorans (strain ATCC 35395 / DSM 2834 / JCM 12185 / C2A), this protein is Small ribosomal subunit biogenesis GTPase RsgA.